A 133-amino-acid polypeptide reads, in one-letter code: UPF0225 protein BB3385 (133 aa).

This sequence belongs to the UPF0225 family.

The polypeptide is UPF0225 protein BB3385 (Bordetella bronchiseptica (strain ATCC BAA-588 / NCTC 13252 / RB50) (Alcaligenes bronchisepticus)).